The following is a 116-amino-acid chain: PTS system galactose-specific EIIA component (116 aa).

The PTS EIIA type-3 domain maps to 11 to 109 (DDYMGVVMGI…AVEVVGQERR (99 aa)). Residue H85 is the Tele-phosphohistidine intermediate of the active site. Phosphohistidine; by HPr is present on H85. D88 is a binding site for Mg(2+).

As to quaternary structure, homotrimer. Requires Mg(2+) as cofactor.

Functionally, the phosphoenolpyruvate-dependent sugar phosphotransferase system (sugar PTS), a major carbohydrate active transport system, catalyzes the phosphorylation of incoming sugar substrates concomitantly with their translocation across the cell membrane. Involved in galactose transport with PtcB and Lmg_0963. This is PTS system galactose-specific EIIA component from Lactococcus lactis subsp. cremoris (strain MG1363).